The sequence spans 141 residues: Hemoglobin subunit alpha-A (141 aa).

Residues Val1–Arg141 enclose the Globin domain. Residue His58 participates in O2 binding. A heme b-binding site is contributed by His87.

It belongs to the globin family. In terms of assembly, heterotetramer of two alpha chains and two beta chains. As to expression, red blood cells.

Its function is as follows. Involved in oxygen transport from the lung to the various peripheral tissues. This chain is Hemoglobin subunit alpha-A (HBAA), found in Trigonoceps occipitalis (White-headed vulture).